Here is a 121-residue protein sequence, read N- to C-terminus: MAEHNEFGKEGEEEAAAYLIDKGYSIRHRNWHCGKKELDIVAEYRNELIVIEVKTRKNTRFGNPEDAVTDKKIRRIIASTDAYLRKFSVDLPVRFDIITLVGEKTPFTIEHIEEAFYPPIW.

Belongs to the UPF0102 family.

The polypeptide is UPF0102 protein BVU_1879 (Phocaeicola vulgatus (strain ATCC 8482 / DSM 1447 / JCM 5826 / CCUG 4940 / NBRC 14291 / NCTC 11154) (Bacteroides vulgatus)).